We begin with the raw amino-acid sequence, 93 residues long: Small ribosomal subunit protein bS20c (93 aa).

This sequence belongs to the bacterial ribosomal protein bS20 family.

The protein resides in the plastid. Its subcellular location is the chloroplast. In terms of biological role, binds directly to 16S ribosomal RNA. The polypeptide is Small ribosomal subunit protein bS20c (Trieres chinensis (Marine centric diatom)).